Here is a 943-residue protein sequence, read N- to C-terminus: Protein translocase subunit SecA (943 aa).

Residues Q77, 95–99 (GEGKT), and D484 each bind ATP.

It belongs to the SecA family. In terms of assembly, monomer and homodimer. Part of the essential Sec protein translocation apparatus which comprises SecA, SecYEG and auxiliary proteins SecDF. Other proteins may also be involved.

It is found in the cell membrane. The protein resides in the cytoplasm. The enzyme catalyses ATP + H2O + cellular proteinSide 1 = ADP + phosphate + cellular proteinSide 2.. Part of the Sec protein translocase complex. Interacts with the SecYEG preprotein conducting channel. Has a central role in coupling the hydrolysis of ATP to the transfer of proteins into and across the cell membrane, serving as an ATP-driven molecular motor driving the stepwise translocation of polypeptide chains across the membrane. The polypeptide is Protein translocase subunit SecA (Mesoplasma florum (strain ATCC 33453 / NBRC 100688 / NCTC 11704 / L1) (Acholeplasma florum)).